We begin with the raw amino-acid sequence, 414 residues long: Probable acetyl-CoA acetyltransferase (414 aa).

Catalysis depends on cysteine 110, which acts as the Acyl-thioester intermediate. CoA is bound by residues tyrosine 205, lysine 244–leucine 246, and lysine 249. A K(+)-binding site is contributed by tyrosine 205. 2 residues coordinate K(+): alanine 266 and alanine 268. Serine 269 is a CoA binding site. Valine 366 contributes to the K(+) binding site. Catalysis depends on proton acceptor residues histidine 370 and cysteine 400.

Belongs to the thiolase-like superfamily. Thiolase family.

The catalysed reaction is 2 acetyl-CoA = acetoacetyl-CoA + CoA. This Dictyostelium discoideum (Social amoeba) protein is Probable acetyl-CoA acetyltransferase.